The sequence spans 843 residues: Aconitase AMT8-2 (843 aa).

258–260 (DSH) lines the substrate pocket. Residues C450, C513, and C516 each contribute to the [4Fe-4S] cluster site. Substrate contacts are provided by residues R536, R541, and 712-713 (SR).

Belongs to the aconitase/IPM isomerase family.

It functions in the pathway mycotoxin biosynthesis. Aconitase; part of the gene clusters that mediate the biosynthesis of AM-toxins, host-selective toxins (HSTs) causing Alternaria blotch on apple, a worldwide distributed disease. AM-toxins are cyclic depsipeptides containing the 3 residues 2-hydroxy-isovaleric acid (2-HIV), dehydroalanine, L-alanine which are common for all 3 AM-toxins I to III. The fourth precursor is L-alpha-amino-methoxyphenyl-valeric acid (L-Amv) for AM-toxin I, L-alpha-amino-phenyl-valeric acid (L-Apv) for AM-toxin II, and L-alpha-amino-hydroxyphenyl-valeric acid (L-Ahv) for AM-toxin III. AM-toxins have two target sites for affecting susceptible apple cells; they cause invagination of the plasma membrane and electrolyte loss and chloroplast disorganization. The non-ribosomal peptide synthetase AMT1 contains 4 catalytic modules and is responsible for activation of each residue in AM-toxin. The aldo-keto reductase AMT2 catalyzes the conversion of 2-keto-isovaleric acid (2-KIV) to 2-hydroxy-isovaleric acid (2-HIV), one of the precursor residues incorporated by AMT1 during AM-toxin biosynthesis, by reduction of its ketone to an alcohol. The cytochrome P450 monooxygenase AMT3 and the thioesterase AMT4 are also important for AM-toxin production, but their exact function within the AM-toxin biosynthesis are not known yet. Up to 21 proteins (including AMT1 to AMT4) are predicted to be involved in AM-toxin biosynthesis since their expression ishighly up-regulated in AM-toxin-producing cultures. This is Aconitase AMT8-2 from Alternaria alternata (Alternaria rot fungus).